Here is a 572-residue protein sequence, read N- to C-terminus: Proline--tRNA ligase (572 aa).

The protein belongs to the class-II aminoacyl-tRNA synthetase family. ProS type 1 subfamily. Homodimer.

It localises to the cytoplasm. The catalysed reaction is tRNA(Pro) + L-proline + ATP = L-prolyl-tRNA(Pro) + AMP + diphosphate. Its function is as follows. Catalyzes the attachment of proline to tRNA(Pro) in a two-step reaction: proline is first activated by ATP to form Pro-AMP and then transferred to the acceptor end of tRNA(Pro). As ProRS can inadvertently accommodate and process non-cognate amino acids such as alanine and cysteine, to avoid such errors it has two additional distinct editing activities against alanine. One activity is designated as 'pretransfer' editing and involves the tRNA(Pro)-independent hydrolysis of activated Ala-AMP. The other activity is designated 'posttransfer' editing and involves deacylation of mischarged Ala-tRNA(Pro). The misacylated Cys-tRNA(Pro) is not edited by ProRS. This Salmonella newport (strain SL254) protein is Proline--tRNA ligase.